We begin with the raw amino-acid sequence, 134 residues long: uncharacterized protein (134 aa).

Positions 1-26 are cleaved as a signal peptide; the sequence is MRLYKAMALCLPLVVICTSEVSQSTA. The tract at residues 77-98 is disordered; the sequence is GEKNEEVAGPVDGEGSEEEAFD.

This is an uncharacterized protein from Encephalitozoon cuniculi (strain GB-M1) (Microsporidian parasite).